The primary structure comprises 426 residues: C2H2 type master regulator of conidiophore development brlA (426 aa).

Disordered regions lie at residues 25–71 and 281–302; these read CPSM…DRGT and GVRL…KQSL. A compositionally biased stretch (low complexity) spans 30 to 44; the sequence is SSFSPLESPTPTPTS. Residues 45 to 58 are compositionally biased toward polar residues; that stretch reads IYSQGSLASPSWPE. Residues 288–297 show a composition bias toward basic residues; the sequence is PSRKMARKQP. 2 consecutive C2H2-type zinc fingers follow at residues 316–340 and 346–371; these read FKCK…MKSH and HVCW…TKTH. A disordered region spans residues 384-426; the sequence is LDETSPDYNPDYRGPLTADGRPMPGGTLDESMPSREISMEWDE.

The protein resides in the nucleus. Its function is as follows. BrlA, abaA and wetA are pivotal regulators of conidiophore development and conidium maturation. They act individually and together to regulate their own expression and that of numerous other sporulation-specific genes. Binds promoters of target genes at brlA response elements (BREs) containing the conserved sequence 5'-(C/A)(A/G)AGGG(G/A)-3'. Positively regulates expression of the gliotoxin biosynthetic gene cluster in actively growing vegetative cells, and likely bridges morphological and chemical development during the life-cycle. Regulates (directly or indirectly) the ergot cluster genes. Positively regulates expression of the fumiquinazoline C biosynthetic gene cluster. Positively regulates expression of the melanin biosynthetic gene cluster. Mediates repression of ribosomal protein gene expression in response to nitrogen depletion. The chain is C2H2 type master regulator of conidiophore development brlA from Aspergillus fumigatus (strain ATCC MYA-4609 / CBS 101355 / FGSC A1100 / Af293) (Neosartorya fumigata).